Consider the following 236-residue polypeptide: MEAHLIFGPTSTGKTSVAIALAKRTGFPVIVLDRIQCYSQLSVGGGRPSAAEFQGTRRIYLIEGSLDEGVISAERAHECLVAAVEAHKPEGGVILEGGSISLFKRMAQSSYWNCGFTWHVTRLHLGGEEIFLAAAKKRINQMMQPDEQGNSFLGELVSVWKTTALRATLEGICGYRYAIEFAGKQGLEMDALTSLNRRQLEQLVHGMAHEYLCYARQQEQELPLPSLAGGEGPPFQ.

The protein belongs to the isopentenyl transferase family.

The enzyme catalyses dimethylallyl diphosphate + AMP = N(6)-(dimethylallyl)adenosine 5'-phosphate + diphosphate. Transfers dimethylallyl groups to AMP as part of the biosynthesis of cytokinin phytohormones. This chain is Adenylate dimethylallyltransferase (ipt), found in Allorhizobium ampelinum (strain ATCC BAA-846 / DSM 112012 / S4) (Agrobacterium vitis (strain S4)).